Consider the following 72-residue polypeptide: Heat shock factor-binding protein 1-like protein 1 (72 aa).

A coiled-coil region spans residues D12 to S66.

Belongs to the HSBP1 family.

This Rattus norvegicus (Rat) protein is Heat shock factor-binding protein 1-like protein 1 (Hsbp1l1).